A 575-amino-acid polypeptide reads, in one-letter code: Thiol:disulfide interchange protein DsbD (575 aa).

The N-terminal stretch at 1 to 24 is a signal peptide; sequence MIKRTLMLFLLLCSPLLTPAAANA. Disulfide bonds link cysteine 126/cysteine 132 and cysteine 192/cysteine 314. The next 8 helical transmembrane spans lie at 180–200, 216–236, 253–273, 297–317, 336–356, 367–387, 394–414, and 425–445; these read AILIGIGIAFTPCVLPMYPLI, IFWLALSYVQGMAVTYTLLGL, YVLIGLSVLFILLALSMFGLY, LFGVFAMGALAGLICSPCTTA, GLTLYLYALGMGLPLIAVTLF, WMQYVKEAFGFIILALPVFLL, AWGIRLWSLLAVSFLGWGFVL, and VIQLILLILMLIATRPLQDWF. The 132-residue stretch at 444-575 folds into the Thioredoxin domain; it reads WFWGTTVTQQ…FNEHLQHLPK (132 aa). Cysteines 490 and 493 form a disulfide.

Belongs to the thioredoxin family. DsbD subfamily.

It localises to the cell inner membrane. The enzyme catalyses [protein]-dithiol + NAD(+) = [protein]-disulfide + NADH + H(+). It catalyses the reaction [protein]-dithiol + NADP(+) = [protein]-disulfide + NADPH + H(+). In terms of biological role, required to facilitate the formation of correct disulfide bonds in some periplasmic proteins and for the assembly of the periplasmic c-type cytochromes. Acts by transferring electrons from cytoplasmic thioredoxin to the periplasm. This transfer involves a cascade of disulfide bond formation and reduction steps. The protein is Thiol:disulfide interchange protein DsbD of Photorhabdus laumondii subsp. laumondii (strain DSM 15139 / CIP 105565 / TT01) (Photorhabdus luminescens subsp. laumondii).